The following is a 451-amino-acid chain: Phosphoglucosamine mutase (451 aa).

Residue Ser107 is the Phosphoserine intermediate of the active site. The Mg(2+) site is built by Ser107, Asp246, Asp248, and Asp250. Phosphoserine is present on Ser107.

Belongs to the phosphohexose mutase family. Mg(2+) serves as cofactor. Activated by phosphorylation.

It carries out the reaction alpha-D-glucosamine 1-phosphate = D-glucosamine 6-phosphate. Its function is as follows. Catalyzes the conversion of glucosamine-6-phosphate to glucosamine-1-phosphate. This is Phosphoglucosamine mutase from Burkholderia cenocepacia (strain ATCC BAA-245 / DSM 16553 / LMG 16656 / NCTC 13227 / J2315 / CF5610) (Burkholderia cepacia (strain J2315)).